The primary structure comprises 344 residues: GTPase Obg (344 aa).

The 159-residue stretch at 1–159 folds into the Obg domain; sequence MKFLDQAKVY…RWIWLRLKLI (159 aa). The OBG-type G domain maps to 160–327; it reads ADAGLVGLPN…ALRLLLSVVE (168 aa). GTP-binding positions include 166–173, 191–195, 212–215, 279–282, and 308–310; these read GLPNAGKS, FTTLH, DIPG, SKVD, and SAQ. The Mg(2+) site is built by Ser-173 and Thr-193.

The protein belongs to the TRAFAC class OBG-HflX-like GTPase superfamily. OBG GTPase family. As to quaternary structure, monomer. Mg(2+) is required as a cofactor.

It is found in the cytoplasm. An essential GTPase which binds GTP, GDP and possibly (p)ppGpp with moderate affinity, with high nucleotide exchange rates and a fairly low GTP hydrolysis rate. Plays a role in control of the cell cycle, stress response, ribosome biogenesis and in those bacteria that undergo differentiation, in morphogenesis control. The protein is GTPase Obg of Xanthobacter autotrophicus (strain ATCC BAA-1158 / Py2).